We begin with the raw amino-acid sequence, 1099 residues long: MESKSLNTLALRCAARKIPASEFLNLYKEFYNETFPANSIDNDDAKTQEGSGSQDKTDVEESISKPVGSKNDPVAILCAEFMKLLENGKYVILADYVVEVLFVNYHSELVREFLPKLKDLMNKGILIHFFSKSCAFFVNLTDNLVISQLIKDLRATIVPCILETNFCDISNELVVAIAKFLQAVLRFTPQPIQINSETYRDNTFNLTKRLSLINKILSKKFAGIIDKKLQFKEVLGPFTKDSTLDFDNSPSITSPQFIPSPLPSMKERSVTSSQSAIKYKDLKLLRYYKNIWLNSKLMNWQPFDSEFISNYSAIKSSLYPDQVQNIQNVDLLFTDLIETAFTCFAQFVSNKLYHQSNSTYNLLERKWILFLSKILPLLVYKNSSRTAHVIGNALDGIDDKVIKAISAYYQENDDGRSRNDDLFDDYPSTSLDIRHDFIKSLTMLGVVPPVFITNYLRGDQTVDSKALATTDDLTFTNQQGIIEIVNDIPNFIRSSLEGMEMENVSEPTLVSSNGLLQVLSNFDTVSPTKQFELANAIVDMLSESSTTFELNTFVKLTAVLTFNYSHSLTSILMYVTPEVLTKLYLEFVDKHWNSQVIGKQETDGESQFENVNISMSFSWAILMLTILYKQYHIDFVSMRADYTTDNIKNSFAITFVENLPDISDLFFIDEKNSDDPEVQVKSHKLVRDWLNDLFVNGSLSDSLLQNIEPKQLAILVPYIFKQVTLAMEIGAVGDLQNLIGGFEYFLQPFMLVGLIKVMYWLEQYLSCLKSDETDEKLIQKVLSLLNTIICPSTLNEDSKAFHFAVLRLNAIPLLGILYQFRSNKHAESNYGIYSSDNEGNPTLELMISRLISSLSISPVYDIDSTILVTDNNFVQKPPKFQSFFVTNEISMNKMLTNQMNSFWSLHSSTYYNLDFLKTLIDTLTPKQFLLDVLRTLEYKVETLGVKDVRNKSSSNESDQVIDYLFYFLVLYDIENSEDAKAMAQFMEDTVDISINGDSGIVKQETQPKSEYNPDDDIDMLFGENDTSMQANEEDTLDNKELKSDRNCALGKNRHTFGFIIHEIKLSYGTLESDSMSYEDYKKICEYHSRYLKMLKTCIF.

Positions 41-66 (DNDDAKTQEGSGSQDKTDVEESISKP) are disordered.

This sequence belongs to the Mediator complex subunit 5 family. Component of the Mediator complex.

It is found in the nucleus. Its function is as follows. Component of the Mediator complex, a coactivator involved in the regulated transcription of nearly all RNA polymerase II-dependent genes. Mediator functions as a bridge to convey information from gene-specific regulatory proteins to the basal RNA polymerase II transcription machinery. Mediator is recruited to promoters by direct interactions with regulatory proteins and serves as a scaffold for the assembly of a functional preinitiation complex with RNA polymerase II and the general transcription factors. This Candida glabrata (strain ATCC 2001 / BCRC 20586 / JCM 3761 / NBRC 0622 / NRRL Y-65 / CBS 138) (Yeast) protein is Mediator of RNA polymerase II transcription subunit 5 (NUT1).